Here is a 327-residue protein sequence, read N- to C-terminus: MEDSLDTRLYPEPSLSQVGSWRVSSLPSGSPQLPSPTGPSLETARAHILALGPQQLLAQDEEGDTLLHLFAARGLRWAAYAAAEVLQMYRQLDIREHKGKTPLLVAAAANQPLIVEDLLSLGAEPNATDHQGRSVLHVAATYGLPGVLSAVFKSGIQVDLEARDFEGLTPLHTAVLALNAAMLPASVCPRMQNSQARDRLTCVQMLLQMGASHTSQEIKSNKTILHLAVQAANPTLVQLLLGLPRGDLRAFVNMKAHGNTALHMAAALPPGPPQEAIVRHLLAAGADPTLRNLENEQPVHLLRPGPGPEGLRQLLKRSRTAPPGLSS.

A disordered region spans residues 1-40; the sequence is MEDSLDTRLYPEPSLSQVGSWRVSSLPSGSPQLPSPTGPS. Residues 14 to 23 show a composition bias toward polar residues; it reads SLSQVGSWRV. ANK repeat units lie at residues 62–97, 98–127, 131–160, 166–215, 220–250, and 257–290; these read EGDT…IREH, KGKT…EPNA, QGRS…QVDL, EGLT…SHTS, SNKT…DLRA, and HGNT…DPTL. Residues 293-327 form a disordered region; that stretch reads LENEQPVHLLRPGPGPEGLRQLLKRSRTAPPGLSS.

This sequence belongs to the NF-kappa-B inhibitor family. As to quaternary structure, interacts with NFKB1, RELA and RELB; in the nucleus. In terms of tissue distribution, specifically expressed in spleen and at low levels in thymus. Expressed in a population of antigen-presenting dendritic cells which may act as regulators of systemic inflammatory response.

It localises to the nucleus. In terms of biological role, regulates the expression of IL-2, IL-6, and other cytokines through regulation on NF-kappa-B activity. Functions in the regulation of inflammatory responses. Involved in the induction of T helper 17 cells (Th17) differentiation upon recognition of antigen by T cell antigen receptor (TCR). According to PubMed:11931770, it may also regulate TCR-induced negative selection of thymocytes. The chain is NF-kappa-B inhibitor delta (Nfkbid) from Mus musculus (Mouse).